Reading from the N-terminus, the 529-residue chain is Serine hydroxymethyltransferase 3, chloroplastic (529 aa).

The N-terminal 60 residues, 1 to 60, are a transit peptide targeting the chloroplast; the sequence is MQACCGGNSMASLQQPGRVQGSVFPPIMPPVTKFSQQLKFNISKPFRSSFLKRNLVSEMR. The residue at position 314 (lysine 314) is an N6-(pyridoxal phosphate)lysine.

This sequence belongs to the SHMT family. In terms of assembly, homotetramer. Pyridoxal 5'-phosphate serves as cofactor.

Its subcellular location is the plastid. It is found in the chloroplast. The catalysed reaction is (6R)-5,10-methylene-5,6,7,8-tetrahydrofolate + glycine + H2O = (6S)-5,6,7,8-tetrahydrofolate + L-serine. It functions in the pathway one-carbon metabolism; tetrahydrofolate interconversion. With respect to regulation, inhibited by 5-CH3-H4PteGlu1/5 and 5-HCO-H4PteGlu1/5 in vitro. In terms of biological role, catalyzes the interconversion of serine and glycine and directs the hydroxymethyl moiety of serine into the metabolic network of H4PteGlu(n)-bound one-carbon units. The polypeptide is Serine hydroxymethyltransferase 3, chloroplastic (Arabidopsis thaliana (Mouse-ear cress)).